Here is a 456-residue protein sequence, read N- to C-terminus: Probable tRNA(Ile)-lysidine synthase (456 aa).

ATP is bound at residue 30–35 (SGGVDS).

This sequence belongs to the tRNA(Ile)-lysidine synthase family.

It localises to the cytoplasm. It carries out the reaction cytidine(34) in tRNA(Ile2) + L-lysine + ATP = lysidine(34) in tRNA(Ile2) + AMP + diphosphate + H(+). Its function is as follows. Ligates lysine onto the cytidine present at position 34 of the AUA codon-specific tRNA(Ile) that contains the anticodon CAU, in an ATP-dependent manner. Cytidine is converted to lysidine, thus changing the amino acid specificity of the tRNA from methionine to isoleucine. The protein is Probable tRNA(Ile)-lysidine synthase of Schizosaccharomyces pombe (strain 972 / ATCC 24843) (Fission yeast).